Consider the following 106-residue polypeptide: UPF0145 protein CPF_0876 (106 aa).

This sequence belongs to the UPF0145 family.

The chain is UPF0145 protein CPF_0876 from Clostridium perfringens (strain ATCC 13124 / DSM 756 / JCM 1290 / NCIMB 6125 / NCTC 8237 / Type A).